Here is a 344-residue protein sequence, read N- to C-terminus: Arginine N-succinyltransferase (344 aa).

Position 125 (L125) interacts with succinyl-CoA. Residue H229 is the Proton donor of the active site.

Belongs to the arginine N-succinyltransferase family.

It catalyses the reaction succinyl-CoA + L-arginine = N(2)-succinyl-L-arginine + CoA + H(+). The protein operates within amino-acid degradation; L-arginine degradation via AST pathway; L-glutamate and succinate from L-arginine: step 1/5. In terms of biological role, catalyzes the transfer of succinyl-CoA to arginine to produce N(2)-succinylarginine. This Enterobacter sp. (strain 638) protein is Arginine N-succinyltransferase.